We begin with the raw amino-acid sequence, 107 residues long: uncharacterized protein (107 aa).

The helical transmembrane segment at 25–42 threads the bilayer; it reads LSLCSVLLSWLICAMCLW.

The protein localises to the host membrane. This is an uncharacterized protein from Galliformes (FAdV-1).